A 637-amino-acid chain; its full sequence is MADIEELKFDAEVGKVLSLVVHSLYTNKDIFLRELLSNASDACDKLRHEFLSNHDLMEEGEELKVVISVDKDSKQLSICDNGIGMNRDELIANLGTIASSGTQRFLEALGGDKAKGYDLIGKFGVGFYSVFMVASEVVVDTCRAGESVGYRWRSSGDGGFTIEKLGEDVPRGTKITLTLKEDESGFLDKFRIEHVVTTYSDHLGYPVYFLDEKGEEEKLNSGIAIWTKPKAEVTAAEHLEFFRSVAHIGSEPWMVIHNKNEGAIEYTNLLYIPSVKPFDLFHPDRRCSVKLYVNRVFITEDNVQIIPQYLRFIRGVIDSSDLPLNISRETLQNNRIVEKIKTSVTKKVLSALKEKAESDHESYSKFWENFGPVLKEGLCEAMDTESREGVLSVCKFHTSACAAGELVSLADYISRMKPGQESIFYLSGDDLESTKRSPQIEKLVSSGIEVILLVDPVDDFWTSVVSEYKGVPFKSVMRVGEKDLEKCIGASDDSGDKTSEDSGESASDKESIGSFIEYLKKVLDGVVSDVRVSKKLTTSLVCLAVPDNSMDIRMERFLREQKQLNYKGNRILEINIDHPIAKSLLKEHEARGESELLNGIVHLLYDEACIIEGEEIRSTVDFASRINGVLAKIFSSK.

The a; substrate-binding stretch occupies residues 1–328 (MADIEELKFD…SSDLPLNISR (328 aa)). The tract at residues 329–556 (ETLQNNRIVE…DNSMDIRMER (228 aa)) is b. Residues 488 to 508 (IGASDDSGDKTSEDSGESASD) form a disordered region. Positions 494 to 508 (SGDKTSEDSGESASD) are enriched in basic and acidic residues. Residues 557–637 (FLREQKQLNY…GVLAKIFSSK (81 aa)) are c.

This sequence belongs to the heat shock protein 90 family. As to quaternary structure, homodimer.

It localises to the cytoplasm. Molecular chaperone. Has ATPase activity. The chain is Chaperone protein HtpG from Anaplasma phagocytophilum (strain HZ).